The following is a 540-amino-acid chain: Glucose-6-phosphate isomerase (540 aa).

The Proton donor role is filled by Glu-350. Active-site residues include His-381 and Lys-503.

Belongs to the GPI family.

It localises to the cytoplasm. The enzyme catalyses alpha-D-glucose 6-phosphate = beta-D-fructose 6-phosphate. Its pathway is carbohydrate biosynthesis; gluconeogenesis. It participates in carbohydrate degradation; glycolysis; D-glyceraldehyde 3-phosphate and glycerone phosphate from D-glucose: step 2/4. Functionally, catalyzes the reversible isomerization of glucose-6-phosphate to fructose-6-phosphate. The protein is Glucose-6-phosphate isomerase of Burkholderia pseudomallei (strain 1106a).